Here is a 370-residue protein sequence, read N- to C-terminus: StAR-related lipid transfer protein 7, mitochondrial (370 aa).

The transit peptide at 1-58 directs the protein to the mitochondrion; sequence MLPRRLLAAWLAGTRGGGLLALLANQCRFVTGLRVRRAQQIAQLYGRLYSESSRRVLL. Positions 86-111 form a coiled coil; sequence DEERIQEEELQRSINEMKRLEEMSNM. 2 disordered regions span residues 111-138 and 343-370; these read MFQSSGVQHHPPEPKAQTEGNEDSEGKE and MSSEAKATSQSSERKNEGSCGPARIEYA. One can recognise an START domain in the interval 112-327; that stretch reads FQSSGVQHHP…LHMATLKAKN (216 aa).

Post-translationally, proteolytically cleaved by PARL. As to expression, expressed in nasal epithelial cells. Down-regulated in nasal epithelial cells in patients experiencing an asthma exacerbation as compared to stable asthmatics and healthy controls.

The protein localises to the mitochondrion. Functionally, may play a protective role in mucosal tissues by preventing exaggerated allergic responses. This is StAR-related lipid transfer protein 7, mitochondrial (STARD7) from Homo sapiens (Human).